A 102-amino-acid chain; its full sequence is Small ribosomal subunit protein uS10 (102 aa).

The protein belongs to the universal ribosomal protein uS10 family. In terms of assembly, part of the 30S ribosomal subunit.

Functionally, involved in the binding of tRNA to the ribosomes. This Rhizobium etli (strain CIAT 652) protein is Small ribosomal subunit protein uS10.